The following is a 628-amino-acid chain: Cytoplasmic dynein 1 intermediate chain 1 (628 aa).

Composition is skewed to basic and acidic residues over residues 1-13 (MSDK…ELER) and 20-60 (QIRE…RETE). The segment at 1–114 (MSDKSDLKAE…RTLQWDTDPS (114 aa)) is disordered. Ser-2 is modified (N-acetylserine). At Ser-50 the chain carries Phosphoserine. The span at 70–79 (PEPPLVPTPM) shows a compositional bias: pro residues. Residues 80–90 (SPSSKSVSTPS) show a composition bias toward low complexity. At Ser-83 the chain carries Phosphoserine. Thr-88 is subject to Phosphothreonine. A phosphoserine mark is found at Ser-90, Ser-94, and Ser-97. A compositionally biased stretch (polar residues) spans 105 to 114 (RTLQWDTDPS). The tract at residues 130–146 (KLGVSKVTQVDFLPREV) is interaction with DYNLT1. Positions 152–204 (ETQTPLATHQSEEDEEDEEMVEPKIGHDSELENQEKKQETKEAPPRELTEEEK) are disordered. Thr-159 is subject to Phosphothreonine. Ser-162 and Ser-180 each carry phosphoserine. The span at 172-204 (VEPKIGHDSELENQEKKQETKEAPPRELTEEEK) shows a compositional bias: basic and acidic residues. WD repeat units follow at residues 268-317 (SKHR…TTPE), 321-361 (HCQS…RTPV), 370-411 (AHTH…TPQE), 420-460 (SKPV…AGIG), 465-510 (GHQG…PLYS), 513-553 (DNAD…EVPT), and 559-598 (EGAS…VPHN). Ser-618 carries the post-translational modification Phosphoserine.

The protein belongs to the dynein intermediate chain family. Homodimer. The cytoplasmic dynein 1 complex consists of two catalytic heavy chains (HCs) and a number of non-catalytic subunits presented by intermediate chains (ICs), light intermediate chains (LICs) and light chains (LCs); the composition seems to vary in respect to the IC, LIC and LC composition. The heavy chain homodimer serves as a scaffold for the probable homodimeric assembly of the respective non-catalytic subunits. The ICs and LICs bind directly to the HC dimer and the LCs assemble on the IC dimer. Interacts with DYNC1H1. Interacts with DYNLT1 and DYNLT3. Interacts with DCTN1. Interacts with DYNLL2. Interacts with MCRS1; the interaction is required for the proper distribution of centriolar satellites.

It localises to the cytoplasm. It is found in the chromosome. The protein localises to the centromere. The protein resides in the kinetochore. Its subcellular location is the cytoskeleton. It localises to the spindle pole. Functionally, acts as one of several non-catalytic accessory components of the cytoplasmic dynein 1 complex that are thought to be involved in linking dynein to cargos and to adapter proteins that regulate dynein function. Cytoplasmic dynein 1 acts as a motor for the intracellular retrograde motility of vesicles and organelles along microtubules. The intermediate chains mediate the binding of dynein to dynactin via its 150 kDa component (p150-glued) DCTN1. May play a role in mediating the interaction of cytoplasmic dynein with membranous organelles and kinetochores. This chain is Cytoplasmic dynein 1 intermediate chain 1 (Dync1i1), found in Mus musculus (Mouse).